Reading from the N-terminus, the 959-residue chain is Nucleoporin NUP100/NSP100 (959 aa).

Residues 1–104 (MFGNNRPMFG…NSSNASNGNT (104 aa)) form a disordered region. FG repeat units lie at residues 2 to 3 (FG), 9 to 10 (FG), and Gly-17. Positions 12-36 (SNLSFGSNTSSFGGQQSQQPNSLFG) are enriched in polar residues. Residues 21–24 (SSFG) form an SLFG 1; approximate repeat. The SLFG 2 repeat unit spans residues 33–36 (SLFG). Over residues 37 to 48 (NSNNNNNSTSNN) the composition is skewed to low complexity. One copy of the SLFG 3; approximate repeat lies at 51-54 (SGFG). 2 stretches are compositionally biased toward low complexity: residues 56-81 (FTSAAGSNSNSLFGNNNTQNNGAFGQ) and 92-104 (GSLNSSNASNGNT). An SLFG 4 repeat occupies 66 to 69 (SLFG). The stretch at 77-80 (GAFG) is one GLFG 1; approximate repeat. An SLFG 5; approximate repeat occupies 89-92 (SPFG). An FG 4 repeat occupies 105 to 106 (FG). The GLFG 2; approximate repeat unit spans residues 112–115 (GSFG). Residues 121–136 (AFNNNSNSTNSPFGFN) are compositionally biased toward low complexity. Residues 121–172 (AFNNNSNSTNSPFGFNKPNTGGTLFGSQNNNSAGTSSLFGGQSTSTTGTFGN) form a disordered region. The stretch at 131 to 134 (SPFG) is one SLFG 6; approximate repeat. Residues 137 to 153 (KPNTGGTLFGSQNNNSA) show a composition bias toward polar residues. The stretch at 145–146 (FG) is one FG 5 repeat. Residues 154–172 (GTSSLFGGQSTSTTGTFGN) show a composition bias toward low complexity. Residues 157 to 160 (SLFG) form an SLFG 7 repeat. The GLFG 3; approximate repeat unit spans residues 168–171 (GTFG). The stretch at 175-178 (SSFG) is one SLFG 8; approximate repeat. Residues 189-190 (FG) form an FG 6 repeat. Residues 190 to 394 (GAGNNSQSNT…NNQQQQSTGL (205 aa)) are disordered. Polar residues predominate over residues 192–245 (GNNSQSNTTGSLFGNQQSSAFGTNNQQGSLFGQQSQNTNNAFGNQNQLGGSSFG). One copy of the SLFG 9 repeat lies at 202–205 (SLFG). One copy of the SLFG 10; approximate repeat lies at 210-213 (SAFG). Residues 220-223 (SLFG) form an SLFG 11 repeat. The FG 7 repeat unit spans residues 233–234 (FG). The SLFG 12; approximate repeat unit spans residues 242–245 (SSFG). The stretch at 253–256 (SLFG) is one SLFG 13 repeat. Low complexity predominate over residues 259–293 (NNTLGNTTNNRNGLFGQMNSSNQGSSNSGLFGQNS). 2 GLFG repeats span residues 271 to 274 (GLFG) and 287 to 290 (GLFG). The segment covering 294–303 (MNSSTQGVFG) has biased composition (polar residues). Residues 300–303 (GVFG) form a GLFG 6; approximate repeat. The span at 304-317 (QNNNQMQINGNNNN) shows a compositional bias: low complexity. The SLFG 14 repeat unit spans residues 318–321 (SLFG). 5 GLFG repeats span residues 333-336 (GLFG), 345-348 (GLFG), 358-361 (GLFG), 379-382 (GLFG), and 393-396 (GLFG). Residues 336-352 (GQNNQQQGSGLFGQNSQ) show a composition bias toward low complexity. Residues 353–377 (TSGSSGLFGQNNQKQPNTFTQSNTG) show a composition bias toward polar residues. 3 SLFG repeats span residues 405-408 (SLFG), 417-420 (SLFG), and 436-439 (SLFG). An FG 8 repeat occupies 448 to 449 (FG). The SLFG 18 repeat unit spans residues 462 to 465 (SLFG). Residues 474 to 477 (SLFG) form an SLFG 19; approximate repeat. GLFG repeat units lie at residues 490 to 493 (GLFG), 506 to 509 (GLFG), and 523 to 526 (GLFG). Residues 542–543 (FG) form an FG 9 repeat. A GLFG 15 repeat occupies 550–553 (GLFG). An FG 10 repeat occupies 569-570 (FG). Disordered regions lie at residues 672-697 (TLERSDRGSSTSNSITDPESSYLNSN) and 745-794 (DDQA…PMIE). Over residues 679-697 (GSSTSNSITDPESSYLNSN) the composition is skewed to polar residues. Over residues 757–775 (LTEKAHSPQTDLKDDHDES) the composition is skewed to basic and acidic residues. Ser-763 and Ser-783 each carry phosphoserine. A compositionally biased stretch (polar residues) spans 777-790 (PDPQSKSPNGSTSI). The 143-residue stretch at 814 to 956 (KNNYYISPSI…GTYSYTIDHP (143 aa)) folds into the Peptidase S59 domain. Residues 816–955 (NYYISPSIET…TGTYSYTIDH (140 aa)) form a nucleoporin RNA-binding motif (NRM) region.

It belongs to the nucleoporin GLFG family. In terms of assembly, component of the nuclear pore complex (NPC). NPC constitutes the exclusive means of nucleocytoplasmic transport. NPCs allow the passive diffusion of ions and small molecules and the active, nuclear transport receptor-mediated bidirectional transport of macromolecules such as proteins, RNAs, ribonucleoparticles (RNPs), and ribosomal subunits across the nuclear envelope. Due to its 8-fold rotational symmetry, all subunits are present with 8 copies or multiples thereof. Through its FG repeats NUP100 interacts with numerous karyopherins including KAP95, and MEX67.

The protein localises to the nucleus. Its subcellular location is the nuclear pore complex. The protein resides in the nucleus membrane. Functions as a component of the nuclear pore complex (NPC). NPC components, collectively referred to as nucleoporins (NUPs), can play the role of both NPC structural components and of docking or interaction partners for transiently associated nuclear transport factors. Active directional transport is assured by both, a Phe-Gly (FG) repeat affinity gradient for these transport factors across the NPC and a transport cofactor concentration gradient across the nuclear envelope (GSP1 and GSP2 GTPases associated predominantly with GTP in the nucleus, with GDP in the cytoplasm). NUP100 plays an important role in several nuclear export and import pathways including poly(A)+ RNA and protein transport. The polypeptide is Nucleoporin NUP100/NSP100 (NUP100) (Saccharomyces cerevisiae (strain ATCC 204508 / S288c) (Baker's yeast)).